Reading from the N-terminus, the 100-residue chain is MARKSVIQREKKRQKLEQKYHLIRRSSKKEISKVPSLSDKWKIHGKLESLPRNSAPIRLHRRCFSTGRPRANYRDFGLSGHILREMVHACLLPGATRSSW.

Belongs to the universal ribosomal protein uS14 family. As to quaternary structure, part of the 30S ribosomal subunit.

It localises to the plastid. Its subcellular location is the chloroplast. Its function is as follows. Binds 16S rRNA, required for the assembly of 30S particles. The polypeptide is Small ribosomal subunit protein uS14c (Glycine max (Soybean)).